Consider the following 171-residue polypeptide: MLP-like protein 31 (171 aa).

Belongs to the MLP family.

The polypeptide is MLP-like protein 31 (MLP31) (Arabidopsis thaliana (Mouse-ear cress)).